The primary structure comprises 777 residues: Phosphate transporter PHO1 homolog 10 (777 aa).

The SPX domain occupies 1–322 (MKFGKIFKKQ…SRNASRNYMK (322 aa)). Over 1-372 (MKFGKIFKKQ…RPKVKRERHR (372 aa)) the chain is Cytoplasmic. The helical transmembrane segment at 373 to 393 (VTFFSGFFSGCSIALVIAVVF) threads the bilayer. Residues 394-408 (KIESRKIMEKNYGTE) lie on the Extracellular side of the membrane. A helical membrane pass occupies residues 409-429 (YMANIIPLYSLFGFIILHMLM). Over 430 to 459 (YSANIYFWKRYRVNYTFIFGFKQGTELGDR) the chain is Cytoplasmic. The chain crosses the membrane as a helical span at residues 460–480 (EVFLVSTGLAVLAFVCFLLNL). Residues 481–496 (QLDMDWRMKHHKTLPE) lie on the Extracellular side of the membrane. A helical membrane pass occupies residues 497–517 (VIPLCLATIVLFILFCPFNII). At 518 to 646 (YRSSRFFFIR…YELKKGRTWM (129 aa)) the chain is on the cytoplasmic side. The EXS domain maps to 581 to 775 (HSHGVYNAFY…HYYDDDDVDK (195 aa)). Residues 647–667 (ILALVSSGVATGMNTFWDIVI) traverse the membrane as a helical segment. At 668 to 691 (DWGLLRKHSKNPYLRDKLLVPHKS) the chain is on the extracellular side. A helical transmembrane segment spans residues 692-712 (VYFAAMVVNVILRVAWMQLVL). Residues 713 to 777 (EFNLKSLHKI…YDDDDVDKDD (65 aa)) lie on the Cytoplasmic side of the membrane.

The protein belongs to the SYG1 (TC 2.A.94) family. Expressed in root epidermis and cortex, leaf blades and hydathodes, stems and flowers.

The protein resides in the cell membrane. May transport inorganic phosphate (Pi). This chain is Phosphate transporter PHO1 homolog 10 (PHO1-H10), found in Arabidopsis thaliana (Mouse-ear cress).